The following is a 357-amino-acid chain: Trans-enoyl reductase buaC (357 aa).

Residue valine 50–lysine 53 coordinates NADP(+). Threonine 135–methionine 142 contributes to the substrate binding site. NADP(+)-binding positions include serine 170 to threonine 173, serine 193 to asparagine 196, tyrosine 211, and leucine 258 to asparagine 259. Alanine 278–threonine 282 lines the substrate pocket. Residue isoleucine 347–serine 348 coordinates NADP(+).

The protein belongs to the zinc-containing alcohol dehydrogenase family. Monomer.

Its pathway is mycotoxin biosynthesis. Functionally, trans-enoyl reductase; part of the gene cluster that mediates the biosynthesis of burnettramic acids, an unusual class of bolaamphiphilic pyrrolizidinediones that display potent antibacterial, antifungal, and cytotoxic activities. The first step of the biosynthesis of burnettramic acids is the hydroxylation of proline by the proline hydroxylase buaE to generate 4-hydroxyproline. The PKS-NRPS buaA and trans-enoyl reductase buaC construct the highly reduced polyketide chain, and the condensation (C) domain of buaA then catalyzes the amide bond formation with the activated 4-hydroxyproline. This is followed by the R domain releasing the nascent polyketide-peptide directly via a Dieckmann condensation to afford a tetramic acid fused to the hydroxyproline, generating the bicyclic pyrrolidinedione moiety. The cytochrome P450 monooxygenases buaD and buaG are likely responsible for the multiple hydroxylations on the polyketide chain and its terminus, although in the heterologous context, buaD does not appear to be required. Therefore, while buaG may be a multifunctional cytochrome P450 monooxygenase, it cannot be ruled out that the two secondary alcohols on the polyketide chain could have an acetate origin. Finally, the glycosyltransferase buaB transfers beta-D-mannose to the aglycone burnettramic acid A to form burnettramic acid A. Burnettramic acid B is a minor cis-pyrrolizidine epimer of burnettramic acid A and it is likely that small amounts of it form naturally in acidic environments. The chain is Trans-enoyl reductase buaC from Petromyces alliaceus (Aspergillus alliaceus).